An 87-amino-acid polypeptide reads, in one-letter code: Small ribosomal subunit protein bS20 (87 aa).

Belongs to the bacterial ribosomal protein bS20 family.

Functionally, binds directly to 16S ribosomal RNA. The polypeptide is Small ribosomal subunit protein bS20 (Lachnoclostridium phytofermentans (strain ATCC 700394 / DSM 18823 / ISDg) (Clostridium phytofermentans)).